Here is a 161-residue protein sequence, read N- to C-terminus: Serine-protein kinase RsbW (161 aa).

It belongs to the anti-sigma-factor family.

It catalyses the reaction L-seryl-[protein] + ATP = O-phospho-L-seryl-[protein] + ADP + H(+). The enzyme catalyses L-threonyl-[protein] + ATP = O-phospho-L-threonyl-[protein] + ADP + H(+). Functionally, negative regulator of sigma-B activity. Phosphorylates and inactivates its specific antagonist protein, RsbV. Upon phosphorylation of RsbV, RsbW is released and binds to sigma-B, thereby blocking its ability to form an RNA polymerase holoenzyme (E-sigma-B). This Bacillus licheniformis (strain ATCC 14580 / DSM 13 / JCM 2505 / CCUG 7422 / NBRC 12200 / NCIMB 9375 / NCTC 10341 / NRRL NRS-1264 / Gibson 46) protein is Serine-protein kinase RsbW.